We begin with the raw amino-acid sequence, 313 residues long: WUSCHEL-related homeobox 5 (313 aa).

The disordered stretch occupies residues 1-32 (METTTTTLGGGGGGRAGGFSDPPSPLSPPLSP). The segment covering 8-17 (LGGGGGGRAG) has biased composition (gly residues). The span at 22 to 31 (PPSPLSPPLS) shows a compositional bias: pro residues. The homeobox; WUS-type DNA-binding region spans 40–104 (LANARWTPTK…NHKARQRQKQ (65 aa)). Disordered regions lie at residues 224-247 (AAGR…GRET) and 271-313 (CAAV…SGGR). The segment covering 271–301 (CAAVSPTTPSASASFSWESESSDSPSSEAPP) has biased composition (low complexity).

This sequence belongs to the WUS homeobox family.

Its subcellular location is the nucleus. Transcription factor which may be involved in developmental processes. In Oryza sativa subsp. japonica (Rice), this protein is WUSCHEL-related homeobox 5 (WOX5).